The following is a 599-amino-acid chain: Elongation factor 4 (599 aa).

In terms of domain architecture, tr-type G spans 5-187; the sequence is SHIRNFSIIA…RLVAVIPPPT (183 aa). GTP is bound by residues 17 to 22 and 134 to 137; these read DHGKST and NKMD.

The protein belongs to the TRAFAC class translation factor GTPase superfamily. Classic translation factor GTPase family. LepA subfamily.

It is found in the cell inner membrane. The catalysed reaction is GTP + H2O = GDP + phosphate + H(+). In terms of biological role, required for accurate and efficient protein synthesis under certain stress conditions. May act as a fidelity factor of the translation reaction, by catalyzing a one-codon backward translocation of tRNAs on improperly translocated ribosomes. Back-translocation proceeds from a post-translocation (POST) complex to a pre-translocation (PRE) complex, thus giving elongation factor G a second chance to translocate the tRNAs correctly. Binds to ribosomes in a GTP-dependent manner. The sequence is that of Elongation factor 4 from Stutzerimonas stutzeri (strain A1501) (Pseudomonas stutzeri).